The chain runs to 255 residues: F-box/SPRY domain-containing protein 1 (255 aa).

The 49-residue stretch at 3-51 (DPVAALCNYNVLEVIFSYLELDDLSHCSQVCKSWNLFLNDENSDVWRWH) folds into the F-box domain. One can recognise a B30.2/SPRY domain in the interval 61 to 253 (LKSDLLSSVS…VSMVYLGTPM (193 aa)).

Belongs to the FBXO45/Fsn family. Component of an E3 ubiquitin ligase complex composed of hiw and Fsn.

It is found in the synapse. It functions in the pathway protein modification; protein ubiquitination. Its function is as follows. Required in the presynaptic motoneuron to down-regulate the levels of wnd and restrain synaptic terminal growth at the neuromuscular junction (NMJ). This is F-box/SPRY domain-containing protein 1 from Drosophila ananassae (Fruit fly).